Here is a 208-residue protein sequence, read N- to C-terminus: 7-carboxy-7-deazaguanine synthase (208 aa).

Substrate is bound by residues 23–25 and R38; that span reads LQG. The 180-residue stretch at 29-208 folds into the Radical SAM core domain; the sequence is WAGGNAFFIR…LQTHKYLGVR (180 aa). Positions 42, 46, and 49 each coordinate [4Fe-4S] cluster. T83 contributes to the substrate binding site. Residues G85 and 126–128 each bind S-adenosyl-L-methionine; that span reads SPK.

It belongs to the radical SAM superfamily. 7-carboxy-7-deazaguanine synthase family. As to quaternary structure, homodimer. It depends on [4Fe-4S] cluster as a cofactor. S-adenosyl-L-methionine serves as cofactor. Mg(2+) is required as a cofactor.

The enzyme catalyses 6-carboxy-5,6,7,8-tetrahydropterin + H(+) = 7-carboxy-7-deazaguanine + NH4(+). It participates in purine metabolism; 7-cyano-7-deazaguanine biosynthesis. Functionally, catalyzes the complex heterocyclic radical-mediated conversion of 6-carboxy-5,6,7,8-tetrahydropterin (CPH4) to 7-carboxy-7-deazaguanine (CDG), a step common to the biosynthetic pathways of all 7-deazapurine-containing compounds. The chain is 7-carboxy-7-deazaguanine synthase from Synechocystis sp. (strain ATCC 27184 / PCC 6803 / Kazusa).